Reading from the N-terminus, the 591-residue chain is NADP-dependent malic enzyme (591 aa).

The active-site Proton donor is Tyr-139. Arg-192 lines the NAD(+) pocket. The active-site Proton acceptor is Lys-210. Positions 282, 283, and 306 each coordinate a divalent metal cation. Asp-306 contributes to the NAD(+) binding site. 335–351 (LFLGAGEAGTGIAELIA) contributes to the NADP(+) binding site. Asn-447 serves as a coordination point for NAD(+).

The protein belongs to the malic enzymes family. In terms of assembly, homotetramer. The cofactor is Mg(2+). Mn(2+) is required as a cofactor.

The protein localises to the cytoplasm. It carries out the reaction (S)-malate + NADP(+) = pyruvate + CO2 + NADPH. The catalysed reaction is oxaloacetate + H(+) = pyruvate + CO2. The protein is NADP-dependent malic enzyme of Vitis vinifera (Grape).